Consider the following 275-residue polypeptide: Hydroxyethylthiazole kinase (275 aa).

Met50 is a binding site for substrate. ATP is bound by residues Arg126 and Ser171. A substrate-binding site is contributed by Ala200.

Belongs to the Thz kinase family. Mg(2+) serves as cofactor.

It carries out the reaction 5-(2-hydroxyethyl)-4-methylthiazole + ATP = 4-methyl-5-(2-phosphooxyethyl)-thiazole + ADP + H(+). It functions in the pathway cofactor biosynthesis; thiamine diphosphate biosynthesis; 4-methyl-5-(2-phosphoethyl)-thiazole from 5-(2-hydroxyethyl)-4-methylthiazole: step 1/1. Functionally, catalyzes the phosphorylation of the hydroxyl group of 4-methyl-5-beta-hydroxyethylthiazole (THZ). The protein is Hydroxyethylthiazole kinase of Acinetobacter baumannii (strain ATCC 17978 / DSM 105126 / CIP 53.77 / LMG 1025 / NCDC KC755 / 5377).